Consider the following 273-residue polypeptide: Undecaprenyl-diphosphatase (273 aa).

7 consecutive transmembrane segments (helical) span residues 4 to 24 (LILLKALLLGIVEGLTEFLPI), 43 to 63 (KAKVFTVAIQLGAILAVCWEY), 82 to 102 (FVINLFIAFLPAAILGLLFIK), 108 to 128 (LFHPMPVAIALVTGGILILWA), 183 to 203 (AAEFSFFLAIPVMFAATFYDV), 217 to 237 (MFATGSVAAFISALIAIRGFI), and 248 to 268 (FAWYRIGFGLIVLLTAYSGLV).

Belongs to the UppP family.

It localises to the cell inner membrane. The enzyme catalyses di-trans,octa-cis-undecaprenyl diphosphate + H2O = di-trans,octa-cis-undecaprenyl phosphate + phosphate + H(+). Its function is as follows. Catalyzes the dephosphorylation of undecaprenyl diphosphate (UPP). Confers resistance to bacitracin. The protein is Undecaprenyl-diphosphatase of Nitrosomonas europaea (strain ATCC 19718 / CIP 103999 / KCTC 2705 / NBRC 14298).